The chain runs to 256 residues: ATP synthase peripheral stalk subunit b, mitochondrial (256 aa).

A mitochondrion-targeting transit peptide spans 1-42; it reads MLSRVVLSAAATAASSLKNAAFLGPGVLQATRTFHTGQPHLA. Lys131 bears the N6-succinyllysine mark. N6-acetyllysine is present on residues Lys139, Lys154, Lys162, Lys221, Lys233, and Lys244.

This sequence belongs to the eukaryotic ATPase B chain family. In terms of assembly, component of the ATP synthase complex composed at least of ATP5F1A/subunit alpha, ATP5F1B/subunit beta, ATP5MC1/subunit c (homooctomer), MT-ATP6/subunit a, MT-ATP8/subunit 8, ATP5ME/subunit e, ATP5MF/subunit f, ATP5MG/subunit g, ATP5MK/subunit k, ATP5MJ/subunit j, ATP5F1C/subunit gamma, ATP5F1D/subunit delta, ATP5F1E/subunit epsilon, ATP5PF/subunit F6, ATP5PB/subunit b, ATP5PD/subunit d, ATP5PO/subunit OSCP. ATP synthase complex consists of a soluble F(1) head domain (subunits alpha(3) and beta(3)) - the catalytic core - and a membrane F(0) domain - the membrane proton channel (subunits c, a, 8, e, f, g, k and j). These two domains are linked by a central stalk (subunits gamma, delta, and epsilon) rotating inside the F1 region and a stationary peripheral stalk (subunits F6, b, d, and OSCP).

Its subcellular location is the mitochondrion. The protein localises to the mitochondrion inner membrane. Its function is as follows. Subunit b, of the mitochondrial membrane ATP synthase complex (F(1)F(0) ATP synthase or Complex V) that produces ATP from ADP in the presence of a proton gradient across the membrane which is generated by electron transport complexes of the respiratory chain. ATP synthase complex consist of a soluble F(1) head domain - the catalytic core - and a membrane F(1) domain - the membrane proton channel. These two domains are linked by a central stalk rotating inside the F(1) region and a stationary peripheral stalk. During catalysis, ATP synthesis in the catalytic domain of F(1) is coupled via a rotary mechanism of the central stalk subunits to proton translocation. In vivo, can only synthesize ATP although its ATP hydrolase activity can be activated artificially in vitro. Part of the complex F(0) domain. Part of the complex F(0) domain and the peripheric stalk, which acts as a stator to hold the catalytic alpha(3)beta(3) subcomplex and subunit a/ATP6 static relative to the rotary elements. This is ATP synthase peripheral stalk subunit b, mitochondrial from Pongo abelii (Sumatran orangutan).